A 53-amino-acid chain; its full sequence is Rho GTPase-activating protein 6 (53 aa).

The protein localises to the cytoplasm. In terms of biological role, GTPase activator for the Rho-type GTPases by converting them to an inactive GDP-bound state. Could regulate the interactions of signaling molecules with the actin cytoskeleton. Promotes continuous elongation of cytoplasmic processes during cell motility and simultaneous retraction of the cell body changing the cell morphology. In Takifugu rubripes (Japanese pufferfish), this protein is Rho GTPase-activating protein 6 (arhgap6).